Here is a 238-residue protein sequence, read N- to C-terminus: Probable transcriptional regulatory protein SAB0618 (238 aa).

This sequence belongs to the TACO1 family. YeeN subfamily.

The protein localises to the cytoplasm. This Staphylococcus aureus (strain bovine RF122 / ET3-1) protein is Probable transcriptional regulatory protein SAB0618.